The chain runs to 183 residues: DELTA-miturgitoxin-Cp1c (183 aa).

The N-terminal stretch at 1-20 (MKFSLFFSVFFLAVLHACLS) is a signal peptide. Residues 21–47 (ESEIDLEDEEHFMSSDSFLSEIQDESR) constitute a propeptide that is removed on maturation. The short motif at 44-47 (DESR) is the Processing quadruplet motif element. 8 disulfide bridges follow: Cys51/Cys66, Cys58/Cys75, Cys65/Cys88, Cys77/Cys86, Cys115/Cys130, Cys122/Cys139, Cys129/Cys157, and Cys141/Cys155. A predicted alpha-helix region spans residues 164-177 (QAIEGALRIAKKLI). Trp181 is modified (tryptophan amide).

This sequence belongs to the neurotoxin 19 (CSTX) family. Double-CSTX subfamily. In terms of processing, cleavage of the propeptide depends on the processing quadruplet motif (XXXR, with at least one of X being E). Expressed by the venom gland.

It is found in the secreted. The protein resides in the target cell membrane. In terms of biological role, spider venom toxin that exhibits cytolytic activity by forming an alpha-helix across the membrane. Lethal to insect larvae. Causes instant paralysis and death in the larvae of the flesh fly (S.carnaria) at doses of 20 ug/g, at doses of less than 10 ug/g causes reversible paralysis. Has cytolytic activity against insect Sf9 cells. Causes stable and irreversible depolarization of fly muscle fibers, leading to contracture at higher toxin concentrations. Destabilizes membranes. This is DELTA-miturgitoxin-Cp1c from Cheiracanthium punctorium (Yellow sac spider).